A 611-amino-acid polypeptide reads, in one-letter code: Chaperone protein HtpG (611 aa).

Residues 1-326 (MSETLERHAF…TEDLPLNVSR (326 aa)) are a; substrate-binding. A b region spans residues 327 to 536 (EMLQATPVLA…SGGPDLQMQR (210 aa)). Positions 537–611 (LLRRAGRGFG…RVAAALAAQA (75 aa)) are c.

Belongs to the heat shock protein 90 family. Homodimer.

It is found in the cytoplasm. Molecular chaperone. Has ATPase activity. This Methylobacterium sp. (strain 4-46) protein is Chaperone protein HtpG.